The primary structure comprises 528 residues: uncharacterized protein (528 aa).

This is an uncharacterized protein from Giardia intestinalis (Giardia lamblia).